Here is a 1575-residue protein sequence, read N- to C-terminus: Ras GTPase-activating-like protein IQGAP2 (1575 aa).

A Phosphoserine modification is found at Ser16. The 116-residue stretch at 41 to 156 (LCHLEEAKRW…YCIHALSLYL (116 aa)) folds into the Calponin-homology (CH) domain. A Phosphothreonine modification is found at Thr356. The 34-residue stretch at 594 to 627 (ESSEGSWVTLNVQEKYNYYYNTDSKEGSWVPPEL) folds into the WW domain. Phosphoserine is present on residues Ser595 and Ser599. IQ domains are found at residues 690–719 (QTES…VFAG), 720–749 (NVDS…YFED), and 750–779 (HKNE…SENP). A phosphothreonine mark is found at Thr782, Thr881, Thr1002, and Thr1269. Residues 933–1182 (YLLLKLFKTA…QEFRKYFQEA (250 aa)) enclose the Ras-GAP domain. Residues Ser1279 and Ser1461 each carry the phosphoserine modification.

Its function is as follows. Binds to activated CDC42 and RAC1 but does not seem to stimulate their GTPase activity. Associates with calmodulin. In Mus musculus (Mouse), this protein is Ras GTPase-activating-like protein IQGAP2 (Iqgap2).